Reading from the N-terminus, the 196-residue chain is CRISPR-associated exonuclease Cas4 (196 aa).

Cys23 is a [4Fe-4S] cluster binding site. His50, Asp90, and Glu103 together coordinate Mn(2+). 3 residues coordinate [4Fe-4S] cluster: Cys184, Cys187, and Cys193.

This sequence belongs to the CRISPR-associated exonuclease Cas4 family. Requires Mg(2+) as cofactor. It depends on [4Fe-4S] cluster as a cofactor.

The enzyme catalyses exonucleolytic cleavage in the 5'- to 3'-direction to yield nucleoside 3'-phosphates.. In terms of biological role, CRISPR (clustered regularly interspaced short palindromic repeat) is an adaptive immune system that provides protection against mobile genetic elements (viruses, transposable elements and conjugative plasmids). CRISPR clusters contain sequences complementary to antecedent mobile elements and target invading nucleic acids. CRISPR clusters are transcribed and processed into CRISPR RNA (crRNA). This may be a 5' to 3' ssDNA exonuclease. This is CRISPR-associated exonuclease Cas4 from Francisella tularensis subsp. novicida (strain U112).